The sequence spans 198 residues: dTTP/UTP pyrophosphatase (198 aa).

Aspartate 75 (proton acceptor) is an active-site residue.

Belongs to the Maf family. YhdE subfamily. It depends on a divalent metal cation as a cofactor.

The protein localises to the cytoplasm. It carries out the reaction dTTP + H2O = dTMP + diphosphate + H(+). The catalysed reaction is UTP + H2O = UMP + diphosphate + H(+). In terms of biological role, nucleoside triphosphate pyrophosphatase that hydrolyzes dTTP and UTP. May have a dual role in cell division arrest and in preventing the incorporation of modified nucleotides into cellular nucleic acids. The polypeptide is dTTP/UTP pyrophosphatase (Wolbachia sp. subsp. Drosophila simulans (strain wRi)).